The following is a 556-amino-acid chain: uncharacterized protein (556 aa).

A disordered region spans residues 69 to 129; that stretch reads RRGHTSGHAS…SSARSSSTSG (61 aa). Composition is skewed to low complexity over residues 74-85 and 93-129; these read SGHASEHTSSSR and SMSS…STSG. Residues 379-399 form a helical membrane-spanning segment; it reads LGLYIFIGVLLGLIGVIGLFI. The segment at 498–541 adopts an RING-type; atypical zinc-finger fold; sequence CTICLCEYSEESPLYRELPCHHIFHPACIDPYLLKNSDLCPLCK.

Its subcellular location is the vacuole membrane. It is found in the cell membrane. This is an uncharacterized protein from Schizosaccharomyces pombe (strain 972 / ATCC 24843) (Fission yeast).